Here is a 480-residue protein sequence, read N- to C-terminus: Protein nucleotidyltransferase YdiU (480 aa).

ATP is bound by residues Gly-86, Gly-88, Arg-89, Lys-109, Asp-121, Gly-122, Arg-172, and Arg-179. Residue Asp-248 is the Proton acceptor of the active site. Residues Asn-249 and Asp-258 each coordinate Mg(2+). An ATP-binding site is contributed by Asp-258.

Belongs to the SELO family. Mg(2+) is required as a cofactor. Mn(2+) serves as cofactor.

The catalysed reaction is L-seryl-[protein] + ATP = 3-O-(5'-adenylyl)-L-seryl-[protein] + diphosphate. It carries out the reaction L-threonyl-[protein] + ATP = 3-O-(5'-adenylyl)-L-threonyl-[protein] + diphosphate. The enzyme catalyses L-tyrosyl-[protein] + ATP = O-(5'-adenylyl)-L-tyrosyl-[protein] + diphosphate. It catalyses the reaction L-histidyl-[protein] + UTP = N(tele)-(5'-uridylyl)-L-histidyl-[protein] + diphosphate. The catalysed reaction is L-seryl-[protein] + UTP = O-(5'-uridylyl)-L-seryl-[protein] + diphosphate. It carries out the reaction L-tyrosyl-[protein] + UTP = O-(5'-uridylyl)-L-tyrosyl-[protein] + diphosphate. In terms of biological role, nucleotidyltransferase involved in the post-translational modification of proteins. It can catalyze the addition of adenosine monophosphate (AMP) or uridine monophosphate (UMP) to a protein, resulting in modifications known as AMPylation and UMPylation. The chain is Protein nucleotidyltransferase YdiU from Salmonella agona (strain SL483).